Consider the following 275-residue polypeptide: 3-methyl-2-oxobutanoate hydroxymethyltransferase (275 aa).

2 residues coordinate Mg(2+): Asp-44 and Asp-83. 3-methyl-2-oxobutanoate-binding positions include 44-45 (DS), Asp-83, and Lys-113. Residue Glu-115 coordinates Mg(2+). The active-site Proton acceptor is the Glu-182.

This sequence belongs to the PanB family. Homodecamer; pentamer of dimers. It depends on Mg(2+) as a cofactor.

It localises to the cytoplasm. The catalysed reaction is 3-methyl-2-oxobutanoate + (6R)-5,10-methylene-5,6,7,8-tetrahydrofolate + H2O = 2-dehydropantoate + (6S)-5,6,7,8-tetrahydrofolate. The protein operates within cofactor biosynthesis; (R)-pantothenate biosynthesis; (R)-pantoate from 3-methyl-2-oxobutanoate: step 1/2. Functionally, catalyzes the reversible reaction in which hydroxymethyl group from 5,10-methylenetetrahydrofolate is transferred onto alpha-ketoisovalerate to form ketopantoate. The protein is 3-methyl-2-oxobutanoate hydroxymethyltransferase of Clostridium botulinum (strain Loch Maree / Type A3).